Here is a 109-residue protein sequence, read N- to C-terminus: Tyrosine-protein phosphatase 4 (109 aa).

Residues 1 to 109 (SKSASIVMLT…QNSGNHPIVI (109 aa)) enclose the Tyrosine-protein phosphatase domain. Glutamate 78 is a binding site for substrate.

Belongs to the protein-tyrosine phosphatase family.

It carries out the reaction O-phospho-L-tyrosyl-[protein] + H2O = L-tyrosyl-[protein] + phosphate. The sequence is that of Tyrosine-protein phosphatase 4 (STY-4) from Styela plicata (Wrinkled sea squirt).